A 556-amino-acid polypeptide reads, in one-letter code: Formate--tetrahydrofolate ligase (556 aa).

65-72 contributes to the ATP binding site; sequence TPAGEGKS.

It belongs to the formate--tetrahydrofolate ligase family.

The enzyme catalyses (6S)-5,6,7,8-tetrahydrofolate + formate + ATP = (6R)-10-formyltetrahydrofolate + ADP + phosphate. It participates in one-carbon metabolism; tetrahydrofolate interconversion. This Clostridium perfringens (strain SM101 / Type A) protein is Formate--tetrahydrofolate ligase.